The following is a 309-amino-acid chain: Aspartate carbamoyltransferase catalytic subunit (309 aa).

Carbamoyl phosphate is bound by residues Arg55 and Thr56. Residue Lys85 coordinates L-aspartate. 3 residues coordinate carbamoyl phosphate: Arg106, His135, and Gln138. 2 residues coordinate L-aspartate: Arg168 and Arg230. Leu268 and Pro269 together coordinate carbamoyl phosphate.

It belongs to the aspartate/ornithine carbamoyltransferase superfamily. ATCase family. In terms of assembly, heterododecamer (2C3:3R2) of six catalytic PyrB chains organized as two trimers (C3), and six regulatory PyrI chains organized as three dimers (R2).

The enzyme catalyses carbamoyl phosphate + L-aspartate = N-carbamoyl-L-aspartate + phosphate + H(+). It participates in pyrimidine metabolism; UMP biosynthesis via de novo pathway; (S)-dihydroorotate from bicarbonate: step 2/3. In terms of biological role, catalyzes the condensation of carbamoyl phosphate and aspartate to form carbamoyl aspartate and inorganic phosphate, the committed step in the de novo pyrimidine nucleotide biosynthesis pathway. This Wigglesworthia glossinidia brevipalpis protein is Aspartate carbamoyltransferase catalytic subunit.